We begin with the raw amino-acid sequence, 477 residues long: MASATPAMSENAVLRHKAASTTGIDYESSAAVSPAESPRTSASSTSLSSLSSLDANEKKDEYAGLLDTYGNAFTPPDFSIKDIRAAIPKHCYERSTIKSYAYVLRDLLCLSTTFYLFHNFVTPENIPSNPLRFVLWSIYTVLQGLFATGLWVIGHECGHCAFSPSPFISDLTGWVIHSALLVPYFSWKFSHSAHHKGIGNMERDMVFLPRTREQQATRLGRAVEELGDLCEETPIYTALHLVGKQLIGWPSYLMTNATGHNFHERQREGRGKGKKNGFGGGVNHFDPRSPIFEARQAKYIVLSDIGLGLAIAALVYLGNRFGWANMAVWYFLPYLWVNHWLVAITFLQHTDPTLPHYNREEWNFVRGGACTIDRDLGFIGRHLFHGIADTHVVHHYVSRIPFYNADEASEAIKPIMGKHYRSDTAHGPVGFLHALWKTARWCQWVEPSADAQGAGKGILFYRNRNKLGTKPISMKTQ.

The disordered stretch occupies residues 26-48; that stretch reads YESSAAVSPAESPRTSASSTSLS. Over residues 27 to 48 the composition is skewed to low complexity; sequence ESSAAVSPAESPRTSASSTSLS. Transmembrane regions (helical) follow at residues 101–118 and 133–153; these read AYVLRDLLCLSTTFYLFH and FVLWSIYTVLQGLFATGLWVI. The Histidine box-1 motif lies at 155–159; sequence HECGH. Residues 167–187 form a helical membrane-spanning segment; that stretch reads FISDLTGWVIHSALLVPYFSW. A Histidine box-2 motif is present at residues 191 to 195; it reads HSAHH. The next 3 membrane-spanning stretches (helical) occupy residues 234 to 254, 299 to 319, and 327 to 347; these read PIYTALHLVGKQLIGWPSYLM, YIVLSDIGLGLAIAALVYLGN, and AVWYFLPYLWVNHWLVAITFL.

This sequence belongs to the fatty acid desaturase type 1 family.

It is found in the microsome membrane. The catalysed reaction is (9Z)-octadecenoate + AH2 + O2 = (12R)-hydroxy-(9Z)-octadecenoate + A + H2O. It functions in the pathway lipid metabolism; monounsaturated fatty acid biosynthesis. Its function is as follows. Oleate hydroxylase involved in the biosynthesis of ricinoleate (12-hydroxy-cis-9-octadecenoate), that is present at high levels in C.purpurea sclerotium tissue. Exhibits delta(12) hydroxylase activity on 16C and 18C monounsaturated fatty acids (i.e. oleic and palmitoleic acids), and, to a lower extent, gamma(3) hydroxylase activity on ricinoleate. The chain is Oleate hydroxylase FAH12 from Claviceps purpurea (Ergot fungus).